A 94-amino-acid polypeptide reads, in one-letter code: Large ribosomal subunit protein uL23 (94 aa).

It belongs to the universal ribosomal protein uL23 family. As to quaternary structure, part of the 50S ribosomal subunit. Contacts protein L29, and trigger factor when it is bound to the ribosome.

Functionally, one of the early assembly proteins it binds 23S rRNA. One of the proteins that surrounds the polypeptide exit tunnel on the outside of the ribosome. Forms the main docking site for trigger factor binding to the ribosome. The polypeptide is Large ribosomal subunit protein uL23 (Symbiobacterium thermophilum (strain DSM 24528 / JCM 14929 / IAM 14863 / T)).